We begin with the raw amino-acid sequence, 971 residues long: GEM-interacting protein (971 aa).

Phosphoserine is present on Ser19. 3 disordered regions span residues 41–79 (AGDP…PEGP), 231–267 (LRAR…AQAK), and 383–476 (DTKK…IENG). A compositionally biased stretch (basic and acidic residues) spans 44–56 (PVRREDLEPDKAD). Residues 59–69 (TVVTEENSEAS) are compositionally biased toward polar residues. Phosphoserine occurs at positions 75, 235, 238, 247, 436, and 440. The 264-residue stretch at 85–348 (EELDLRLIRT…CCVPFEPGQR (264 aa)) folds into the F-BAR domain. Residues 458-471 (SSDDFEERDPDLGD) are compositionally biased toward acidic residues. The Phorbol-ester/DAG-type zinc finger occupies 492–536 (THRLRRLRGPAKCRECEAFMVSGTECEECFLTCHKRCLETLLILC). In terms of domain architecture, Rho-GAP spans 553-756 (LQLPRDFPEE…FLIVHYEQIF (204 aa)). Thr659 is subject to Phosphothreonine. Residues 799–865 (IALDSSPDPK…LGAQSRGHFS (67 aa)) are disordered. The span at 805-817 (PDPKHHSALEKCP) shows a compositional bias: basic and acidic residues. A phosphoserine mark is found at Ser884, Ser908, and Ser924.

Interacts with GEM through its N-terminal.

Its function is as follows. Stimulates, in vitro and in vivo, the GTPase activity of RhoA. The protein is GEM-interacting protein (Gmip) of Mus musculus (Mouse).